A 263-amino-acid polypeptide reads, in one-letter code: MSDILREICDTTRAEVARRKAALPLADVTARAEDANAPRGFANALTRTADSGRPALIAEIKKASPSAGLIRPDFNPAVLARAYHAAGATCLSVLTDGPYFQGHADFLIAARAAVPLPVLRKDFMVDPWQVVEARAMGADCILVILAALDDGAAAEIEACAHDWGMDVLAEVHNEEECARALTCLTTPLLGVNNRNLKTLVTDLAVTERLAKMVPADRVLVAESGLRTRKDLDRMTAVGARRFLIGEHFMRQPDVGDAVRALIG.

It belongs to the TrpC family.

The catalysed reaction is 1-(2-carboxyphenylamino)-1-deoxy-D-ribulose 5-phosphate + H(+) = (1S,2R)-1-C-(indol-3-yl)glycerol 3-phosphate + CO2 + H2O. It functions in the pathway amino-acid biosynthesis; L-tryptophan biosynthesis; L-tryptophan from chorismate: step 4/5. The protein is Indole-3-glycerol phosphate synthase of Rhodospirillum rubrum (strain ATCC 11170 / ATH 1.1.1 / DSM 467 / LMG 4362 / NCIMB 8255 / S1).